A 314-amino-acid chain; its full sequence is Dihydroorotate dehydrogenase (fumarate) (314 aa).

Substrate contacts are provided by residues K46, 70 to 74, and N130; that span reads NSMGL. Residue 46 to 47 coordinates FMN; it reads KS. N130 lines the FMN pocket. Active-site nucleophile residues include S132 and C133. FMN contacts are provided by K167 and I195. 196 to 197 is a substrate binding site; the sequence is NS. FMN-binding positions include G224, 252 to 253, and 274 to 275; these read GG and GT.

Belongs to the dihydroorotate dehydrogenase family. Type 1 subfamily. As to quaternary structure, homodimer. FMN serves as cofactor.

The protein localises to the cytoplasm. It carries out the reaction (S)-dihydroorotate + fumarate = orotate + succinate. It participates in pyrimidine metabolism; UMP biosynthesis via de novo pathway. The activity is independent of the presence of oxygen. Its function is as follows. Catalyzes the conversion of dihydroorotate to orotate with fumarate as the electron acceptor. The protein is Dihydroorotate dehydrogenase (fumarate) (URA1) of Lachancea kluyveri (strain ATCC 58438 / CBS 3082 / BCRC 21498 / NBRC 1685 / JCM 7257 / NCYC 543 / NRRL Y-12651) (Yeast).